We begin with the raw amino-acid sequence, 78 residues long: MEFREQVLNLLAEVAENDIVKENPDVEIFEEGIIDSFQTVGLLLEIQNKLDIEVSIMDFDRDEWATPNKIVEALEELR.

The Carrier domain occupies 1–78; that stretch reads MEFREQVLNL…KIVEALEELR (78 aa). The residue at position 36 (S36) is an O-(pantetheine 4'-phosphoryl)serine.

It belongs to the DltC family. Post-translationally, 4'-phosphopantetheine is transferred from CoA to a specific serine of apo-DCP.

The protein localises to the cytoplasm. The protein operates within cell wall biogenesis; lipoteichoic acid biosynthesis. Its function is as follows. Carrier protein involved in the D-alanylation of lipoteichoic acid (LTA). The loading of thioester-linked D-alanine onto DltC is catalyzed by D-alanine--D-alanyl carrier protein ligase DltA. The DltC-carried D-alanyl group is further transferred to cell membrane phosphatidylglycerol (PG) by forming an ester bond, probably catalyzed by DltD. D-alanylation of LTA plays an important role in modulating the properties of the cell wall in Gram-positive bacteria, influencing the net charge of the cell wall. This chain is D-alanyl carrier protein, found in Staphylococcus aureus (strain Mu50 / ATCC 700699).